We begin with the raw amino-acid sequence, 390 residues long: DNA polymerase IV (390 aa).

The 182-residue stretch at 6-187 (VMHVDLDAFF…LDIAVMPGIG (182 aa)) folds into the UmuC domain. The Mg(2+) site is built by Asp10 and Asp105. The active site involves Glu106.

Belongs to the DNA polymerase type-Y family. As to quaternary structure, monomer. It depends on Mg(2+) as a cofactor.

It is found in the cytoplasm. It catalyses the reaction DNA(n) + a 2'-deoxyribonucleoside 5'-triphosphate = DNA(n+1) + diphosphate. Poorly processive, error-prone DNA polymerase involved in untargeted mutagenesis. Copies undamaged DNA at stalled replication forks, which arise in vivo from mismatched or misaligned primer ends. These misaligned primers can be extended by PolIV. Exhibits no 3'-5' exonuclease (proofreading) activity. May be involved in translesional synthesis, in conjunction with the beta clamp from PolIII. The sequence is that of DNA polymerase IV from Dehalococcoides mccartyi (strain CBDB1).